We begin with the raw amino-acid sequence, 319 residues long: L-threo-3-hydroxyaspartate ammonia-lyase (319 aa).

N6-(pyridoxal phosphate)lysine is present on lysine 53. Pyridoxal 5'-phosphate-binding positions include asparagine 80, 179–183, and threonine 304; that span reads GGGGM.

Belongs to the serine/threonine dehydratase family. May be either a monomer or a homodimer. Pyridoxal 5'-phosphate is required as a cofactor. The cofactor is Mn(2+). Mg(2+) serves as cofactor. Requires Ca(2+) as cofactor.

The enzyme catalyses (3S)-3-hydroxy-L-aspartate = oxaloacetate + NH4(+). With respect to regulation, is strongly inhibited by hydroxylamine and EDTA in vitro. In terms of biological role, catalyzes the deamination of L-threo-3-hydroxyaspartate to oxaloacetate and ammonia. Shows a high specificity towards L-threo-3-hydroxyaspartate as other 3-hydroxyaminoacids, i.e. D,L-erythro- and D-threo-3-hydroxyaspartate, D-threonine, L-threonine, D,L-allothreonine, D,L-threo-3-phenylserine, D-serine, and L-serine, are not substrates for this enzyme. Exhibits no detectable serine and aspartate racemase activity. Might play a role in the detoxification of naturally occurring 3-hydroxyaspartate in Pseudomonas sp. T62 cells. In Pseudomonas sp, this protein is L-threo-3-hydroxyaspartate ammonia-lyase.